A 149-amino-acid polypeptide reads, in one-letter code: Calmodulin (149 aa).

N-acetylalanine is present on alanine 2. EF-hand domains lie at 8 to 43 (EQIA…LGQN), 44 to 79 (PTEA…KMKD), 81 to 116 (DSEE…LGEK), and 117 to 149 (LTDE…MMAK). Ca(2+)-binding residues include aspartate 21, aspartate 23, aspartate 25, cysteine 27, glutamate 32, aspartate 57, aspartate 59, asparagine 61, threonine 63, glutamate 68, aspartate 94, aspartate 96, aspartate 98, and glutamate 105. The residue at position 116 (lysine 116) is an N6,N6,N6-trimethyllysine. Ca(2+) is bound by residues aspartate 130, aspartate 132, aspartate 134, glutamine 136, and glutamate 141.

This sequence belongs to the calmodulin family.

Functionally, calmodulin mediates the control of a large number of enzymes, ion channels and other proteins by Ca(2+). Among the enzymes to be stimulated by the calmodulin-Ca(2+) complex are a number of protein kinases and phosphatases. This is Calmodulin from Triticum aestivum (Wheat).